We begin with the raw amino-acid sequence, 465 residues long: Putative apoptosis inhibitor ORF106 (465 aa).

The stretch at 291–357 is one BIR repeat; it reads RECSFSTWPK…MEKETCGWLE (67 aa). Acidic residues predominate over residues 373–382; sequence EGGEDKEEDG. The interval 373–393 is disordered; sequence EGGEDKEEDGGGGGVIEFPKN. The RING-type zinc-finger motif lies at 405-447; the sequence is CKACYERKADIAFIPCGHVFSCNICTMEMFASYKKKKRCPMCR.

The protein is Putative apoptosis inhibitor ORF106 of Magallana gigas (Pacific oyster).